The chain runs to 203 residues: Glutathione S-transferase (203 aa).

The GST N-terminal domain occupies Pro-2–Gly-79. Glutathione is bound by residues Tyr-8, Trp-39, Lys-43, Gly-49–Met-51, and Gln-63–Ser-64. The 123-residue stretch at Asp-81–Val-203 folds into the GST C-terminal domain.

Belongs to the GST superfamily. Sigma family. As to quaternary structure, homodimer.

It catalyses the reaction RX + glutathione = an S-substituted glutathione + a halide anion + H(+). Its function is as follows. Conjugation of reduced glutathione to a wide number of exogenous and endogenous hydrophobic electrophiles. This chain is Glutathione S-transferase (GstS1), found in Anopheles gambiae (African malaria mosquito).